The following is a 254-amino-acid chain: uncharacterized protein (254 aa).

Residues 163-182 form a disordered region; sequence PNKHTQHKRSTRRTSPKDYN. The span at 166–176 shows a compositional bias: basic residues; it reads HTQHKRSTRRT. A helical membrane pass occupies residues 207–227; sequence AHSAWILIIIIIIIVVILFFF.

It belongs to the RL11 family.

The protein resides in the host membrane. This is an uncharacterized protein from Human cytomegalovirus (strain Merlin) (HHV-5).